The sequence spans 418 residues: Alpha-(1-&gt;3)-arabinofuranosyltransferase (418 aa).

A run of 11 helical transmembrane segments spans residues 25 to 45, 81 to 101, 102 to 122, 125 to 145, 153 to 173, 183 to 203, 210 to 230, 266 to 286, 293 to 312, 327 to 349, and 372 to 392; these read NAVAWPLAMLLMAHRFFVLAI, YLYNPGATLLLAPLGYITHFT, LARWMFIAVNLLAIVLAFGLL, LSGWALRSMVWPIAIALAMLT, IFSNINGILLLMLAIFLWCVV, VIGLAILIKPMFLPLLFLPLV, LILGILTPVIFNAVAWFLVPG, MEITWFLIFGAMVGLAVLALL, PYFWAATTTGVLLTGVFFLS, IFTLLGSRSVFHNWVAWVAAYFF, and ATVGWGLLIVVTFVSALIWFI.

Belongs to the glycosyltransferase 87 family.

It is found in the cell membrane. The catalysed reaction is Adds an alpha-D-arabinofuranosyl group from trans,octacis-decaprenylphospho-beta-D-arabinofuranose at the 3-O-position of an alpha-(1-&gt;5)-arabinofuranan chain attached to a beta-(1-&gt;5)-galactofuranan chain.. Its pathway is cell wall biogenesis; cell wall polysaccharide biosynthesis. In terms of biological role, involved in the biosynthesis of the arabinogalactan (AG) region of the mycolylarabinogalactan-peptidoglycan (mAGP) complex, an essential component of the corynebacterial cell wall. Catalyzes the addition of an arabinofuranosyl (Araf) residue from the sugar donor beta-D-arabinofuranosyl-1-monophosphoryldecaprenol (DPA) on the C-3 of an alpha-(1-&gt;5)-linked Araf from the arabinan backbone of AG. The polypeptide is Alpha-(1-&gt;3)-arabinofuranosyltransferase (Corynebacterium glutamicum (strain ATCC 13032 / DSM 20300 / JCM 1318 / BCRC 11384 / CCUG 27702 / LMG 3730 / NBRC 12168 / NCIMB 10025 / NRRL B-2784 / 534)).